The chain runs to 234 residues: 3-deoxy-manno-octulosonate cytidylyltransferase (234 aa).

Belongs to the KdsB family.

Its subcellular location is the cytoplasm. It carries out the reaction 3-deoxy-alpha-D-manno-oct-2-ulosonate + CTP = CMP-3-deoxy-beta-D-manno-octulosonate + diphosphate. It participates in nucleotide-sugar biosynthesis; CMP-3-deoxy-D-manno-octulosonate biosynthesis; CMP-3-deoxy-D-manno-octulosonate from 3-deoxy-D-manno-octulosonate and CTP: step 1/1. It functions in the pathway bacterial outer membrane biogenesis; lipopolysaccharide biosynthesis. Functionally, activates KDO (a required 8-carbon sugar) for incorporation into bacterial lipopolysaccharide in Gram-negative bacteria. This Aquifex aeolicus (strain VF5) protein is 3-deoxy-manno-octulosonate cytidylyltransferase.